The sequence spans 398 residues: 1-deoxy-D-xylulose 5-phosphate reductoisomerase (398 aa).

T10, G11, S12, I13, K37, N38, and N124 together coordinate NADPH. 1-deoxy-D-xylulose 5-phosphate is bound at residue K125. E126 serves as a coordination point for NADPH. D150 provides a ligand contact to Mn(2+). 1-deoxy-D-xylulose 5-phosphate-binding residues include S151, E152, S186, and H209. E152 contacts Mn(2+). G215 serves as a coordination point for NADPH. Residues S222, N227, K228, and E231 each contribute to the 1-deoxy-D-xylulose 5-phosphate site. E231 contacts Mn(2+).

Belongs to the DXR family. As to quaternary structure, homodimer. Mg(2+) is required as a cofactor. The cofactor is Mn(2+).

The enzyme catalyses 2-C-methyl-D-erythritol 4-phosphate + NADP(+) = 1-deoxy-D-xylulose 5-phosphate + NADPH + H(+). It functions in the pathway isoprenoid biosynthesis; isopentenyl diphosphate biosynthesis via DXP pathway; isopentenyl diphosphate from 1-deoxy-D-xylulose 5-phosphate: step 1/6. Catalyzes the NADPH-dependent rearrangement and reduction of 1-deoxy-D-xylulose-5-phosphate (DXP) to 2-C-methyl-D-erythritol 4-phosphate (MEP). The protein is 1-deoxy-D-xylulose 5-phosphate reductoisomerase of Buchnera aphidicola subsp. Schizaphis graminum (strain Sg).